Consider the following 248-residue polypeptide: Triosephosphate isomerase (248 aa).

Position 9 to 11 (9 to 11 (NWK)) interacts with substrate. His94 acts as the Electrophile in catalysis. Glu164 acts as the Proton acceptor in catalysis. Substrate-binding positions include Gly170, Ser209, and 230–231 (GG).

It belongs to the triosephosphate isomerase family. As to quaternary structure, homodimer.

It is found in the cytoplasm. It catalyses the reaction D-glyceraldehyde 3-phosphate = dihydroxyacetone phosphate. The protein operates within carbohydrate biosynthesis; gluconeogenesis. It participates in carbohydrate degradation; glycolysis; D-glyceraldehyde 3-phosphate from glycerone phosphate: step 1/1. Its function is as follows. Involved in the gluconeogenesis. Catalyzes stereospecifically the conversion of dihydroxyacetone phosphate (DHAP) to D-glyceraldehyde-3-phosphate (G3P). This Hahella chejuensis (strain KCTC 2396) protein is Triosephosphate isomerase.